The chain runs to 617 residues: Isopropyl malate synthase gloH (617 aa).

Positions 47–325 (PIWLSTDLRD…ETGLDFSDLL (279 aa)) constitute a Pyruvate carboxyltransferase domain.

It belongs to the alpha-IPM synthase/homocitrate synthase family. LeuA type 2 subfamily.

It carries out the reaction 3-methyl-2-oxobutanoate + acetyl-CoA + H2O = (2S)-2-isopropylmalate + CoA + H(+). The protein operates within mycotoxin biosynthesis. In terms of biological role, 2-isopropylmalate synthase; part of the gene cluster that mediates the biosynthesis of pneumocandins, lipohexapeptides of the echinocandin family that prevent fungal cell wall formation by non-competitive inhibition of beta-1,3-glucan synthase. The 10,12-dimethylmyristoyl side chain is synthesized by the reducing polyketide synthase gloL/GLPKS4. The thioesterase gloN/GLHYD exclusively interacts with gloL/GLPKS4 to maintain turnover of the polyketide side chain. The 10R,12S-dimethylmyristic acid is then transferred to the first thiolation domain of the nonribosomal peptide synthetase gloA/GLNRPS4 by the acyl-AMP ligase gloD/GLligase, followed by its acylation to L-ornithine to trigger elongation of the cyclic hexapeptide. L-ornithine, 4R-hydroxyl-L-proline (generated from L-proline by the dioxygenase gloF/GLOXY2), 3S-hydroxyl-L-homotyrosine (generated by gloG/GLHtyB, gloH/GLHtyA, gloI/GLHtyC, gloJ/GLHtyD and hydroxylated at C-3 by the dioxygenase gloM/GLOXY1), 3R-hydroxyl-L-glutamine (generated from L-glutamine probably by the dioxygenase gloE/GLOXY3) and 3S-hydroxyl-L-proline (generated from L-proline by the dioxygenase gloF/GLOXY2 to yield pneumocandin B0), or 3S-hydroxyl-4S-methyl-L-proline (generated from L-leucine by the dioxygenase gloC/GLOXY4 to yield pneumocandin A0) are sequentially added to the growing chain. The last C domain of gloA/GLNRPS4 is proposed to be responsible for cyclization by condensation to form the peptide bond between L-ornithine and 3S-hydroxyl-4S-methyl-L-proline (for pneumocandin A0) or 3S-hydroxyl-L-proline (for pneumocandin B0). Finally, the subsequent C-4 hydroxylation of 3S-hydroxyl-L-homotyrosine and L-ornithine dihydroxylation at C-4 and C-5 are performed by the cytochrome P450 monooxygenases gloP/GLP450-1 and gloO/GLP450-2, respectively. The polypeptide is Isopropyl malate synthase gloH (Glarea lozoyensis (strain ATCC 20868 / MF5171)).